A 173-amino-acid polypeptide reads, in one-letter code: Crossover junction endodeoxyribonuclease RuvC (173 aa).

Residues D8, E67, and D139 contribute to the active site. Positions 8, 67, and 139 each coordinate Mg(2+).

Belongs to the RuvC family. Homodimer which binds Holliday junction (HJ) DNA. The HJ becomes 2-fold symmetrical on binding to RuvC with unstacked arms; it has a different conformation from HJ DNA in complex with RuvA. In the full resolvosome a probable DNA-RuvA(4)-RuvB(12)-RuvC(2) complex forms which resolves the HJ. Requires Mg(2+) as cofactor.

It is found in the cytoplasm. It catalyses the reaction Endonucleolytic cleavage at a junction such as a reciprocal single-stranded crossover between two homologous DNA duplexes (Holliday junction).. In terms of biological role, the RuvA-RuvB-RuvC complex processes Holliday junction (HJ) DNA during genetic recombination and DNA repair. Endonuclease that resolves HJ intermediates. Cleaves cruciform DNA by making single-stranded nicks across the HJ at symmetrical positions within the homologous arms, yielding a 5'-phosphate and a 3'-hydroxyl group; requires a central core of homology in the junction. The consensus cleavage sequence is 5'-(A/T)TT(C/G)-3'. Cleavage occurs on the 3'-side of the TT dinucleotide at the point of strand exchange. HJ branch migration catalyzed by RuvA-RuvB allows RuvC to scan DNA until it finds its consensus sequence, where it cleaves and resolves the cruciform DNA. This chain is Crossover junction endodeoxyribonuclease RuvC, found in Shewanella sediminis (strain HAW-EB3).